The chain runs to 178 residues: Ribonuclease M5 (178 aa).

In terms of domain architecture, Toprim spans 10-94 (DGVIVCEGKT…YVDMNARLKN (85 aa)). Mg(2+) contacts are provided by E16, D62, and D64.

Belongs to the ribonuclease M5 family. Mg(2+) is required as a cofactor.

The protein resides in the cytoplasm. It carries out the reaction Endonucleolytic cleavage of RNA, removing 21 and 42 nucleotides, respectively, from the 5'- and 3'-termini of a 5S-rRNA precursor.. Its function is as follows. Required for correct processing of both the 5' and 3' ends of 5S rRNA precursor. Cleaves both sides of a double-stranded region yielding mature 5S rRNA in one step. The chain is Ribonuclease M5 (rnmV) from Mycoplasma genitalium (strain ATCC 33530 / DSM 19775 / NCTC 10195 / G37) (Mycoplasmoides genitalium).